A 149-amino-acid polypeptide reads, in one-letter code: MERTFLMIKPDAVQRNLIGEIISRIERKGLKLVGGKFMTVPQSLAEEHYAEHTDKPFYKHLISFITSAPVFAMVVEGEDAVHVARHIIGKTNPSEATPGTIRGDLGLTVGRNIIHGSDSVESANKEINLWFKADELSEYSESRESWLYE.

6 residues coordinate ATP: Lys-9, Phe-57, Arg-85, Thr-91, Arg-102, and Asn-112. Residue His-115 is the Pros-phosphohistidine intermediate of the active site.

Belongs to the NDK family. Homotetramer. Mg(2+) is required as a cofactor.

It is found in the cytoplasm. The catalysed reaction is a 2'-deoxyribonucleoside 5'-diphosphate + ATP = a 2'-deoxyribonucleoside 5'-triphosphate + ADP. The enzyme catalyses a ribonucleoside 5'-diphosphate + ATP = a ribonucleoside 5'-triphosphate + ADP. Functionally, major role in the synthesis of nucleoside triphosphates other than ATP. The ATP gamma phosphate is transferred to the NDP beta phosphate via a ping-pong mechanism, using a phosphorylated active-site intermediate. This is Nucleoside diphosphate kinase from Staphylococcus saprophyticus subsp. saprophyticus (strain ATCC 15305 / DSM 20229 / NCIMB 8711 / NCTC 7292 / S-41).